The sequence spans 506 residues: CDK5 regulatory subunit-associated protein 3 (506 aa).

3 consecutive short sequence motifs (shuffled ATG8-binding motif) follow at residues 267–270 (IDWG), 292–295 (IDWG), and 310–313 (IDWG). The interval 269 to 506 (WGDFGVEAVS…RPVNLMGTSL (238 aa)) is required for interaction with UFL1 and mediates interaction with CHEK1. The segment at 355–370 (DELMELEIFLAQRAVE) is RPL10a-binding domain (RBD). A Glycyl lysine isopeptide (Lys-Gly) (interchain with G-Cter in SUMO2) cross-link involves residue Lys-450.

Belongs to the CDK5RAP3 family. Substrate adapter component of the UFM1 ribosome E3 ligase (UREL) complex, composed of UFL1, DDRGK1 and CDK5RAP3. Interaction with UFL1 anchors CDK5RAP3 in the cytoplasm, preventing its translocation to the nucleus which allows expression of the CCND1 cyclin and progression of cells through the G1/S transition. Interacts with ATG8 family proteins MAP1LC3A, MAP1LC3B, GABARAP, GABARAPL1 and GABARAPL2. Interacts with CDK5R1; competes with CDK5RAP1 and CDK5RAP2. Interacts with RELA. Interacts with CHEK1; may negatively regulate CHEK1 and thereby stimulate entry into mitosis. Interacts with CDKN2A/ARF and MDM2; forms a ternary complex involved in regulation of p53/TP53. Interacts with MAPK14. Interacts with CCNB1. Interacts with TUBG1; may regulate CDK5RAP3 in mitotic G2/M transition checkpoint. As to quaternary structure, (Microbial infection) Interacts with hepatitis B virus large envelope protein mutant pre-s2; promotes mitotic entry. In terms of processing, may be phosphorylated by CDK5. Post-translationally, ubiquitinated. Probably triggers proteasomal degradation and is negatively regulated by UFL1. May be ufmylated. In terms of processing, cleaved by caspases early during apoptosis, the resulting peptides may play a role in rupture of the nuclear envelope. In terms of tissue distribution, ubiquitously expressed. Expressed in heart, brain, placenta, lung, liver, skeletal muscle, kidney and pancreas. Isoform 3 is expressed in kidney, liver, skeletal muscle and placenta.

Its subcellular location is the endoplasmic reticulum membrane. It is found in the cytoplasm. The protein localises to the nucleus. It localises to the cytoskeleton. The protein resides in the microtubule organizing center. Its subcellular location is the centrosome. In terms of biological role, substrate adapter of E3 ligase complexes mediating ufmylation, the covalent attachment of the ubiquitin-like modifier UFM1 to substrate proteins, and which is involved in various processes, such as ribosome recycling and reticulophagy (also called ER-phagy). As part of the UREL complex, plays a key role in ribosome recycling by promoting mono-ufmylation of RPL26/uL24 subunit of the 60S ribosome. Ufmylation of RPL26/uL24 occurs on free 60S ribosomes following ribosome dissociation: it weakens the junction between post-termination 60S subunits and SEC61 translocons, promoting release and recycling of the large ribosomal subunit from the endoplasmic reticulum membrane. Ufmylation of RPL26/uL24 and subsequent 60S ribosome recycling either take place after normal termination of translation or after ribosome stalling during cotranslational translocation at the endoplasmic reticulum. Within the UREL complex, CDK5RAP3 acts as a substrate adapter that constrains UFL1 ligase activity to mono-ufmylate RPL26/uL24 at 'Lys-134'. The UREL complex is also involved in reticulophagy in response to endoplasmic reticulum stress by promoting ufmylation of proteins such as CYB5R3, thereby promoting lysosomal degradation of ufmylated proteins. Also acts as a regulator of transcription: negatively regulates NF-kappa-B-mediated gene transcription through the control of RELA phosphorylation. Also regulates mitotic G2/M transition checkpoint and mitotic G2 DNA damage checkpoint. Through its interaction with CDKN2A/ARF and MDM2 may induce MDM2-dependent p53/TP53 ubiquitination, stabilization and activation in the nucleus, thereby promoting G1 cell cycle arrest and inhibition of cell proliferation. May also play a role in the rupture of the nuclear envelope during apoptosis. May regulate MAPK14 activity by regulating its dephosphorylation by PPM1D/WIP1. Required for liver development. Functionally, (Microbial infection) May be negatively regulated by hepatitis B virus large envelope protein mutant pre-s2 to promote mitotic entry. In Homo sapiens (Human), this protein is CDK5 regulatory subunit-associated protein 3.